The sequence spans 310 residues: Homoserine kinase (310 aa).

Residue 91–101 (PIGSGLGSSAC) participates in ATP binding.

The protein belongs to the GHMP kinase family. Homoserine kinase subfamily.

The protein resides in the cytoplasm. It catalyses the reaction L-homoserine + ATP = O-phospho-L-homoserine + ADP + H(+). The protein operates within amino-acid biosynthesis; L-threonine biosynthesis; L-threonine from L-aspartate: step 4/5. Catalyzes the ATP-dependent phosphorylation of L-homoserine to L-homoserine phosphate. This Escherichia coli O6:H1 (strain CFT073 / ATCC 700928 / UPEC) protein is Homoserine kinase.